Consider the following 1423-residue polypeptide: Interphotoreceptor matrix proteoglycan 2 (1423 aa).

An N-terminal signal peptide occupies residues 1–27; that stretch reads MFAFLWKISLCLLVLGVITGDPQAVAA. Residues 28–1289 lie on the Extracellular side of the membrane; sequence EEKQAKDASP…EYVSEPLVVG (1262 aa). A glycan (N-linked (GlcNAc...) asparagine) is linked at asparagine 150. Residues 245-358 enclose the SEA 1 domain; sequence TEQMIEFSIV…NPTVVYTISD (114 aa). Positions 265–273 are hyaluronan-binding motif involved in chondroitin sulfate A-binding; sequence SDPDTAKYQ. 2 N-linked (GlcNAc...) asparagine glycosylation sites follow: asparagine 325 and asparagine 375. Disordered stretches follow at residues 423 to 469, 522 to 559, and 577 to 602; these read AERP…DSEV, DSSD…DYTA, and TKRT…ADSL. The span at 523–532 shows a compositional bias: acidic residues; the sequence is SSDEFEDTGL. The span at 537–546 shows a compositional bias: low complexity; the sequence is LLPSSPSSHL. Over residues 577-587 the composition is skewed to basic and acidic residues; that stretch reads TKRTVTAEKEV. Asparagine 676 is a glycosylation site (N-linked (GlcNAc...) asparagine). Residues 886–907 form a disordered region; that stretch reads FEVSTDTSTEEQQSLDSSLADR. Over residues 889–902 the composition is skewed to polar residues; the sequence is STDTSTEEQQSLDS. Residues 1083–1196 form the SEA 2 domain; it reads RALVVFFSLR…YSLDVESGEQ (114 aa). Residues asparagine 1128, asparagine 1142, and asparagine 1160 are each glycosylated (N-linked (GlcNAc...) asparagine). EGF-like domains lie at 1196–1234 and 1237–1279; these read QADP…IDGL and NSIC…EHCE. Cystine bridges form between cysteine 1200–cysteine 1211, cysteine 1205–cysteine 1222, cysteine 1240–cysteine 1253, cysteine 1247–cysteine 1263, and cysteine 1265–cysteine 1278. Residues 1266–1274 are hyaluronan-binding motif involved in chondroitin sulfate C-binding; sequence RVGENWWYR. Residues 1290 to 1310 form a helical membrane-spanning segment; that stretch reads IAIASVAGFLLVASAVIFFLA. The Cytoplasmic segment spans residues 1311-1423; the sequence is RTLRDQYTKS…FVRQHQMKLL (113 aa). A hyaluronan-binding motif involved in chondroitin sulfate C-binding region spans residues 1322–1327; sequence TEDSQG.

In terms of processing, highly glycosylated (N- and O-linked carbohydrates). Expressed in retina.

It is found in the photoreceptor outer segment membrane. Its subcellular location is the photoreceptor inner segment membrane. The protein resides in the secreted. The protein localises to the extracellular space. It localises to the extracellular matrix. It is found in the interphotoreceptor matrix. In terms of biological role, chondroitin sulfate- and hyaluronan-binding proteoglycan involved in the organization of interphotoreceptor matrix. This Gallus gallus (Chicken) protein is Interphotoreceptor matrix proteoglycan 2 (IMPG2).